A 144-amino-acid polypeptide reads, in one-letter code: UPF0292 protein MA_4098 (144 aa).

Residues 28-109 (GAVIIVEGKR…KPELQIRNKL (82 aa)) enclose the Toprim domain. Residues Glu34, Asp78, and Asp80 each contribute to the Mg(2+) site.

The protein belongs to the UPF0292 family. The cofactor is Mg(2+).

This chain is UPF0292 protein MA_4098, found in Methanosarcina acetivorans (strain ATCC 35395 / DSM 2834 / JCM 12185 / C2A).